Reading from the N-terminus, the 300-residue chain is Forkhead transcription factor fkh-9 (300 aa).

The fork-head DNA-binding region spans 66 to 161 (RPSLSYKDLI…DKQTLRRRNR (96 aa)). Residues 153 to 208 (KQTLRRRNRQQPRALAKKSDAGRTLSRDDRGSSGSGETSPSPSQPSISPPNENPMP) are disordered. Basic and acidic residues predominate over residues 169–183 (KKSDAGRTLSRDDRG). Over residues 187-198 (SGETSPSPSQPS) the composition is skewed to low complexity.

In terms of tissue distribution, expressed in mechanosensory neurons.

The protein resides in the nucleus. In terms of biological role, transcription factor. Binds to the regulatory elements of genes that contain the sequence motif 5'-TTGTTTCT-3'. Involved in regulating intestinal transcription of vitellogenin vit-2, acting in concert with transcription factors elt-2, mab-3 and daf-16, and also the TGF-beta/Sma/Mab pathway. Functions downstream of the insulin/IGF-1-like signaling (IIS) mediated pathway, in regeneration of axons after injury and in short-term memory, perhaps acting in neurons, and in modulation of longevity, perhaps acting non-neuronally. Plays a role in the modulation of endoplasmic reticulum (ER) homeostasis during chemical and pathogen stress, including exposure to the Gram-negative bacterium P.aeruginosa. In Caenorhabditis elegans, this protein is Forkhead transcription factor fkh-9.